The primary structure comprises 525 residues: GMP synthase [glutamine-hydrolyzing] (525 aa).

The Glutamine amidotransferase type-1 domain maps to 9–207 (RILILDFGSQ…VRDICQCEAL (199 aa)). The active-site Nucleophile is Cys86. Residues His181 and Glu183 contribute to the active site. In terms of domain architecture, GMPS ATP-PPase spans 208-400 (WTPAKIIDDA…LGLPYDMLYR (193 aa)). Residue 235-241 (SGGVDSS) participates in ATP binding.

In terms of assembly, homodimer.

The enzyme catalyses XMP + L-glutamine + ATP + H2O = GMP + L-glutamate + AMP + diphosphate + 2 H(+). Its pathway is purine metabolism; GMP biosynthesis; GMP from XMP (L-Gln route): step 1/1. Catalyzes the synthesis of GMP from XMP. The chain is GMP synthase [glutamine-hydrolyzing] from Salmonella typhi.